The chain runs to 114 residues: Large ribosomal subunit protein bL19 (114 aa).

Belongs to the bacterial ribosomal protein bL19 family.

In terms of biological role, this protein is located at the 30S-50S ribosomal subunit interface and may play a role in the structure and function of the aminoacyl-tRNA binding site. The protein is Large ribosomal subunit protein bL19 of Lactococcus lactis subsp. lactis (strain IL1403) (Streptococcus lactis).